Consider the following 463-residue polypeptide: Xanthine permease XanP (463 aa).

Helical transmembrane passes span 43-63 (LLAM…ALGL), 71-91 (IISM…KAWG), 93-113 (VGSG…PLIM), 126-146 (PTMM…EMVI), 156-176 (IITP…LIQV), 192-212 (TFGA…IILL), 222-242 (VASL…MGML), 260-280 (LYYG…VFMI), 352-372 (GFVV…SGFV), 379-399 (VLGG…VRIV), 409-429 (ILII…PLIL), and 439-459 (LLSS…LIFP).

Belongs to the nucleobase:cation symporter-2 (NCS2) (TC 2.A.40) family.

Its subcellular location is the cell inner membrane. It carries out the reaction xanthine(in) + H(+)(in) = xanthine(out) + H(+)(out). Functionally, specific, proton motive force-dependent high-affinity transporter for xanthine. This Escherichia coli O6:H1 (strain CFT073 / ATCC 700928 / UPEC) protein is Xanthine permease XanP (xanP).